The following is a 514-amino-acid chain: Protein nucleotidyltransferase YdiU (514 aa).

Gly-111, Gly-113, Arg-114, Lys-134, Asp-146, Gly-147, Arg-197, and Arg-204 together coordinate ATP. The active-site Proton acceptor is Asp-276. The Mg(2+) site is built by Asn-277 and Asp-286. Residue Asp-286 coordinates ATP.

The protein belongs to the SELO family. Requires Mg(2+) as cofactor. The cofactor is Mn(2+).

The catalysed reaction is L-seryl-[protein] + ATP = 3-O-(5'-adenylyl)-L-seryl-[protein] + diphosphate. The enzyme catalyses L-threonyl-[protein] + ATP = 3-O-(5'-adenylyl)-L-threonyl-[protein] + diphosphate. It catalyses the reaction L-tyrosyl-[protein] + ATP = O-(5'-adenylyl)-L-tyrosyl-[protein] + diphosphate. It carries out the reaction L-histidyl-[protein] + UTP = N(tele)-(5'-uridylyl)-L-histidyl-[protein] + diphosphate. The catalysed reaction is L-seryl-[protein] + UTP = O-(5'-uridylyl)-L-seryl-[protein] + diphosphate. The enzyme catalyses L-tyrosyl-[protein] + UTP = O-(5'-uridylyl)-L-tyrosyl-[protein] + diphosphate. In terms of biological role, nucleotidyltransferase involved in the post-translational modification of proteins. It can catalyze the addition of adenosine monophosphate (AMP) or uridine monophosphate (UMP) to a protein, resulting in modifications known as AMPylation and UMPylation. This chain is Protein nucleotidyltransferase YdiU, found in Rhodococcus jostii (strain RHA1).